The primary structure comprises 1044 residues: Translation initiation factor IF-2 (1044 aa).

The segment at 31 to 425 (VRSASSTVEP…RKSKRAKRQE (395 aa)) is disordered. Composition is skewed to pro residues over residues 77-98 (GPAP…PQPA) and 106-116 (APAPAPAPRPA). Low complexity predominate over residues 117–148 (EPAANPAPAAPPAFQAPAPAPAERPAAAQRPA). Positions 168–185 (GGPGQGPRPGARPGGPGA) are enriched in gly residues. The span at 204-247 (GPGDRPERSERPDRGDRPQGDRPRSDRPQGERQQGDRPQGDRPG) shows a compositional bias: basic and acidic residues. Low complexity predominate over residues 285-304 (GGAPRPGNNPFASNQGMPRP). Residues 305–328 (QGGPRPTPAGPGGPRPGGPRPNPG) show a composition bias toward pro residues. Residues 329–338 (MMPARPTVGR) are compositionally biased toward low complexity. Over residues 339–409 (PGAGPGAGRP…GTQGAFGRAG (71 aa)) the composition is skewed to gly residues. Residues 413–422 (VRGRKSKRAK) are compositionally biased toward basic residues. A tr-type G domain is found at 537–709 (ARPPVVTVMG…VLLTADASLD (173 aa)). A G1 region spans residues 546 to 553 (GHVDHGKT). A GTP-binding site is contributed by 546-553 (GHVDHGKT). The interval 571 to 575 (GITQH) is G2. A G3 region spans residues 596–599 (DTPG). Residues 596-600 (DTPGH) and 650-653 (NKVD) contribute to the GTP site. The segment at 650-653 (NKVD) is G4. The interval 686–688 (SAR) is G5.

The protein belongs to the TRAFAC class translation factor GTPase superfamily. Classic translation factor GTPase family. IF-2 subfamily.

It localises to the cytoplasm. One of the essential components for the initiation of protein synthesis. Protects formylmethionyl-tRNA from spontaneous hydrolysis and promotes its binding to the 30S ribosomal subunits. Also involved in the hydrolysis of GTP during the formation of the 70S ribosomal complex. This chain is Translation initiation factor IF-2, found in Kineococcus radiotolerans (strain ATCC BAA-149 / DSM 14245 / SRS30216).